The sequence spans 550 residues: Hydroxylamine reductase (550 aa).

[2Fe-2S] cluster contacts are provided by cysteine 3, cysteine 6, cysteine 18, and cysteine 25. Hybrid [4Fe-2O-2S] cluster contacts are provided by histidine 249, glutamate 273, cysteine 317, cysteine 405, cysteine 433, cysteine 458, glutamate 492, and lysine 494. At cysteine 405 the chain carries Cysteine persulfide.

It belongs to the HCP family. It depends on [2Fe-2S] cluster as a cofactor. Requires hybrid [4Fe-2O-2S] cluster as cofactor.

The protein resides in the cytoplasm. It carries out the reaction A + NH4(+) + H2O = hydroxylamine + AH2 + H(+). Functionally, catalyzes the reduction of hydroxylamine to form NH(3) and H(2)O. This chain is Hydroxylamine reductase, found in Salmonella paratyphi A (strain ATCC 9150 / SARB42).